The sequence spans 259 residues: Eukaryotic translation initiation factor 3 subunit G-2 (259 aa).

Residues 179–257 (SAVRISNLSE…LILSVEWSKP (79 aa)) form the RRM domain.

Belongs to the eIF-3 subunit G family. Component of the eukaryotic translation initiation factor 3 (eIF-3) complex. The eIF-3 complex interacts with pix.

It is found in the cytoplasm. RNA-binding component of the eukaryotic translation initiation factor 3 (eIF-3) complex, which is involved in protein synthesis of a specialized repertoire of mRNAs and, together with other initiation factors, stimulates binding of mRNA and methionyl-tRNAi to the 40S ribosome. The eIF-3 complex specifically targets and initiates translation of a subset of mRNAs involved in cell proliferation. This subunit can bind 18S rRNA. The polypeptide is Eukaryotic translation initiation factor 3 subunit G-2 (Drosophila mojavensis (Fruit fly)).